The primary structure comprises 200 residues: MEANPGELERFGKAIRKIWLYETIMLGAEKIAKGNLSEESTSTSESEIPNTSSQQDVISSSEHVSDSLKFWEVLNFLEVSWVPHSGEDGVQHKLSQYVEKDPSTFEELKKRRLAAKNDVYGYVRQIMYSKGQVRIYRGVRCKPNGVLKVSLFYGPCKWVTSMWVTLVPITLRENGSLEDIEFTFNCSLNLKSSKAISAGM.

Residues 37–53 (SEESTSTSESEIPNTSS) are compositionally biased toward low complexity. The disordered stretch occupies residues 37-58 (SEESTSTSESEIPNTSSQQDVI).

Its function is as follows. Plasmid partition require REP1, REP2, and a cis-acting DNA sequence (known as STB). The sequence is that of Trans-acting factor C (C) from Lachancea fermentati (Zygosaccharomyces fermentati).